The sequence spans 468 residues: Glutamate--tRNA ligase 2 (468 aa).

Positions 13–23 match the 'HIGH' region motif; sequence PSPTGYLHIGG. A 'KMSKS' region motif is present at residues 241-245; the sequence is KLSKR. Lys244 lines the ATP pocket.

The protein belongs to the class-I aminoacyl-tRNA synthetase family. Glutamate--tRNA ligase type 1 subfamily. In terms of assembly, monomer.

It is found in the cytoplasm. It catalyses the reaction tRNA(Glu) + L-glutamate + ATP = L-glutamyl-tRNA(Glu) + AMP + diphosphate. Catalyzes the attachment of glutamate to tRNA(Glu) in a two-step reaction: glutamate is first activated by ATP to form Glu-AMP and then transferred to the acceptor end of tRNA(Glu). This chain is Glutamate--tRNA ligase 2, found in Paracoccus denitrificans (strain Pd 1222).